The sequence spans 522 residues: Putative E3 ubiquitin-protein ligase RING1a (522 aa).

The segment covering methionine 1 to serine 10 has biased composition (polar residues). The tract at residues methionine 1–glutamine 119 is disordered. Over residues leucine 32–aspartate 64 the composition is skewed to basic and acidic residues. A compositionally biased stretch (acidic residues) spans alanine 65–aspartate 106. Residues cysteine 136 to arginine 176 form an RING-type zinc finger. 2 disordered regions span residues valine 250 to glycine 347 and arginine 363 to arginine 385. The segment covering asparagine 287–arginine 306 has biased composition (basic and acidic residues). Residues serine 316–serine 325 show a composition bias toward low complexity. 2 stretches are compositionally biased toward polar residues: residues glycine 326–aspartate 336 and threonine 366–valine 384.

As to quaternary structure, homodimer or heterodimer with RING1B. Interacts with CLF. Component of the PRC1-like complex, at least composed of RING1A, RING1B and LHP1.

The protein resides in the nucleus. The catalysed reaction is S-ubiquitinyl-[E2 ubiquitin-conjugating enzyme]-L-cysteine + [acceptor protein]-L-lysine = [E2 ubiquitin-conjugating enzyme]-L-cysteine + N(6)-ubiquitinyl-[acceptor protein]-L-lysine.. Its pathway is protein modification; protein ubiquitination. Its function is as follows. Putative E3 ubiquitin-protein ligase that mediates monoubiquitination of 'Lys-119' of histone H2A (H2AK119ub), thereby playing a central role in histone code and gene regulation. In terms of biological role, as part of the PRC1-like complex, repress class I KNOX gene expression. PcG PRC1 complex maintains the transcriptionally repressive state of many genes, including Hox genes, throughout development. PcG PRC1 complex acts via chromatin remodeling and modification of histones, rendering chromatin heritably changed in its expressibility. The protein is Putative E3 ubiquitin-protein ligase RING1a (RING1A) of Arabidopsis thaliana (Mouse-ear cress).